The following is a 723-amino-acid chain: Preterminal protein (723 aa).

The Nuclear localization signal motif lies at 453–462 (RLPMRRRRRR). A disordered region spans residues 457–492 (RRRRRRAPPPPPMSEELSEPEVEAFPPASPPRRSFE). Residue Ser651 is modified to O-(5'-phospho-DNA)-serine.

The protein belongs to the adenoviridae terminal protein family. In terms of assembly, heterodimer with the polymerase; this heterodimer binds to bp 9 to 18 of the genome. Interacts with host POU2F1; POU2F1 binds to the auxiliary sequences in the inverted terminal repeats and tethers the pTP-POL heterodimer to the origin DNA thereby participating in the assembly of the pre-initiation complex (POL-TP-DBP-NFIA-POU2F1). Post-translationally, preterminal protein is used to replicate viral genome, upon genomic encapsidation it is processed first into iTP and finally into TP by adenovirus protease.

It localises to the host nucleus matrix. In terms of biological role, protein covalently bound to the viral DNA that acts as a primer for viral genomic replication by DNA strand displacement. Assembles on the viral origin of replication in an initiation complex with viral polymerase, DBP, host NFIA and host POU2F1/OCT1. During initiation, the polymerase covalently couples the first dCTP with Ser-580 of pTP. The terminal protein stimulates the template activity over 20 fold compared to protein-free templates. Neo-synthesized viral genomes are linked to two preterminal proteins, one for each 5' end. These new genomes are encapsidated in the nucleus, and during capsid maturation by viral protease, preterminal protein is first cleaved into intermediary (iTP), then into mature TP. May play a role in host nuclear matrix localization of genomic DNA. This chain is Preterminal protein, found in Canis lupus familiaris (Dog).